The chain runs to 462 residues: 7-hydroxymethyl chlorophyll a reductase, chloroplastic (462 aa).

A chloroplast-targeting transit peptide spans 1–20 (MITVVTSRLSLLPPVFSVVN).

Belongs to the FrhB family. In terms of assembly, interacts with SGR1, the chlorophyll catabolic enzymes (CCEs) NYC1, NOL and RCCR, and the LHCII complex. Part of a SGR1-CCE-LHCII complex, which acts in chlorophyll breakdown. FAD is required as a cofactor. Requires iron-sulfur cluster as cofactor.

It localises to the plastid. It is found in the chloroplast. It catalyses the reaction chlorophyll a + 2 oxidized [2Fe-2S]-[ferredoxin] + H2O = 7(1)-hydroxychlorophyll a + 2 reduced [2Fe-2S]-[ferredoxin] + 2 H(+). Functionally, probable iron-sulfur flavoprotein that converts 7-hydroxymethyl chlorophyll a to chlorophyll a using ferredoxin as a reducing equivalent. Catalyzes the reduction of a hydroxymethyl group to a methyl group. Belongs to the chlorophyll catabolic enzymes (CCEs). This is 7-hydroxymethyl chlorophyll a reductase, chloroplastic (HCAR) from Arabidopsis thaliana (Mouse-ear cress).